A 118-amino-acid chain; its full sequence is Small ribosomal subunit protein mS37 (118 aa).

A CHCH domain is found at 42–84 (EATCITEMSMMMACWKQNEFRDEACRKEIQDFFDCSSRAQEAR). 2 consecutive short sequence motifs (cx9C motif) follow at residues 45 to 55 (CITEMSMMMAC) and 66 to 76 (CRKEIQDFFDC). 2 disulfide bridges follow: cysteine 45-cysteine 76 and cysteine 55-cysteine 66. A disordered region spans residues 86 to 105 (MRSIQESLGQSESLSPHKMT). Over residues 89 to 99 (IQESLGQSESL) the composition is skewed to polar residues.

This sequence belongs to the mitochondrion-specific ribosomal protein mS37 family. Component of the mitochondrial ribosome small subunit (28S) which comprises a 12S rRNA and about 30 distinct proteins.

Its subcellular location is the mitochondrion. It localises to the nucleus. This Mus musculus (Mouse) protein is Small ribosomal subunit protein mS37 (Chchd1).